The primary structure comprises 88 residues: Small ribosomal subunit protein uS17 (88 aa).

Belongs to the universal ribosomal protein uS17 family. In terms of assembly, part of the 30S ribosomal subunit.

One of the primary rRNA binding proteins, it binds specifically to the 5'-end of 16S ribosomal RNA. This Leuconostoc mesenteroides subsp. mesenteroides (strain ATCC 8293 / DSM 20343 / BCRC 11652 / CCM 1803 / JCM 6124 / NCDO 523 / NBRC 100496 / NCIMB 8023 / NCTC 12954 / NRRL B-1118 / 37Y) protein is Small ribosomal subunit protein uS17.